An 81-amino-acid polypeptide reads, in one-letter code: Trefoil factor 3 (81 aa).

The first 22 residues, 1–22 (METRAFWTTLLLVLVAGSSCKA), serve as a signal peptide directing secretion. The region spanning 31–74 (SQCMVPANVRVDCGYPTVTSEQCNNRGCCFDSSIPNVPWCFKPL) is the P-type domain. 3 disulfides stabilise this stretch: cysteine 33–cysteine 59, cysteine 43–cysteine 58, and cysteine 53–cysteine 70.

In terms of assembly, monomer. Homodimer; disulfide-linked. In terms of tissue distribution, expressed in goblet cells of the intestines, and colon, in paraventricular hypothalamus and supraoptic nuclei. Weakly expressed in gastric epithelial cells (at protein level). Expressed by goblet cells of small and large intestinal epithelia, kidney and stomach. Expressed in the paraventricular hypothalamus, arcuate nucleus and amygdala of the brain. Weakly expressed in gastric epithelial cells.

It localises to the secreted. Its subcellular location is the extracellular space. It is found in the extracellular matrix. The protein resides in the cytoplasm. Functionally, involved in the maintenance and repair of the intestinal mucosa. Promotes the mobility of epithelial cells in healing processes (motogen). The polypeptide is Trefoil factor 3 (Tff3) (Rattus norvegicus (Rat)).